We begin with the raw amino-acid sequence, 108 residues long: Urease subunit beta (108 aa).

The protein belongs to the urease beta subunit family. Heterotrimer of UreA (gamma), UreB (beta) and UreC (alpha) subunits. Three heterotrimers associate to form the active enzyme.

It is found in the cytoplasm. It carries out the reaction urea + 2 H2O + H(+) = hydrogencarbonate + 2 NH4(+). It participates in nitrogen metabolism; urea degradation; CO(2) and NH(3) from urea (urease route): step 1/1. The protein is Urease subunit beta of Proteus hauseri.